We begin with the raw amino-acid sequence, 273 residues long: Peptidoglycan-N-acetylglucosamine deacetylase BC_1974 (273 aa).

A helical transmembrane segment spans residues 10 to 30 (IVVVLIAIAAVAIGYYMFQSI). The region spanning 69-255 (KVAYLTFDDG…GLKEKGYEFE (187 aa)) is the NodB homology domain. The Proton acceptor role is filled by Asp76. Residues Asp77, His126, and His130 each contribute to the Zn(2+) site. His230 acts as the Proton donor in catalysis.

The protein belongs to the polysaccharide deacetylase family. Zn(2+) serves as cofactor. Co(2+) is required as a cofactor. Requires Ni(2+) as cofactor.

The protein localises to the cell membrane. It catalyses the reaction peptidoglycan-N-acetyl-D-glucosamine + H2O = peptidoglycan-D-glucosamine + acetate.. Inhibited by the hydroxamate N-hydroxy-4-(naphthalene-1-yl)benzamide (NHNB). Its function is as follows. Catalyzes the deacetylation of N-acetylglucosamine (GlcNAc) residues in peptidoglycan. This Bacillus cereus (strain ATCC 14579 / DSM 31 / CCUG 7414 / JCM 2152 / NBRC 15305 / NCIMB 9373 / NCTC 2599 / NRRL B-3711) protein is Peptidoglycan-N-acetylglucosamine deacetylase BC_1974.